We begin with the raw amino-acid sequence, 315 residues long: Malate dehydrogenase (315 aa).

Residues 7 to 12 and D32 contribute to the NAD(+) site; that span reads GAGNIG. Residues R81 and R87 each coordinate substrate. NAD(+)-binding positions include N94 and 117-119; that span reads VTN. Positions 119 and 150 each coordinate substrate. H174 serves as the catalytic Proton acceptor.

This sequence belongs to the LDH/MDH superfamily. MDH type 3 family.

It carries out the reaction (S)-malate + NAD(+) = oxaloacetate + NADH + H(+). Functionally, catalyzes the reversible oxidation of malate to oxaloacetate. In Neorickettsia sennetsu (strain ATCC VR-367 / Miyayama) (Ehrlichia sennetsu), this protein is Malate dehydrogenase.